Consider the following 642-residue polypeptide: Threonine--tRNA ligase (642 aa).

Residues 1-61 (MPIITLPDGS…EEDASLEIIT (61 aa)) form the TGS domain. A catalytic region spans residues 244–535 (DHRKIGKQLD…LIEEYAGFFP (292 aa)). Positions 335, 386, and 512 each coordinate Zn(2+).

Belongs to the class-II aminoacyl-tRNA synthetase family. As to quaternary structure, homodimer. Zn(2+) serves as cofactor.

It is found in the cytoplasm. It catalyses the reaction tRNA(Thr) + L-threonine + ATP = L-threonyl-tRNA(Thr) + AMP + diphosphate + H(+). In terms of biological role, catalyzes the attachment of threonine to tRNA(Thr) in a two-step reaction: L-threonine is first activated by ATP to form Thr-AMP and then transferred to the acceptor end of tRNA(Thr). Also edits incorrectly charged L-seryl-tRNA(Thr). The protein is Threonine--tRNA ligase of Vibrio parahaemolyticus serotype O3:K6 (strain RIMD 2210633).